Consider the following 408-residue polypeptide: DNA primase DnaG (408 aa).

A Toprim domain is found at 171-250; it reads DAIIIVEGRA…AYSPRGKSVE (80 aa). Residues E177, D219, and D221 each coordinate Mg(2+). Residues 276–323 form a disordered region; it reads AEENVERLPPSAAPAEVRAPAGAGRTSEGERPPRREWDSKPPSTLGEH. Residues 284–298 show a composition bias toward low complexity; sequence PPSAAPAEVRAPAGA. Residues 302-314 show a composition bias toward basic and acidic residues; sequence SEGERPPRREWDS.

It belongs to the archaeal DnaG primase family. As to quaternary structure, forms a ternary complex with MCM helicase and DNA. It depends on Mg(2+) as a cofactor.

It carries out the reaction ssDNA + n NTP = ssDNA/pppN(pN)n-1 hybrid + (n-1) diphosphate.. Functionally, RNA polymerase that catalyzes the synthesis of short RNA molecules used as primers for DNA polymerase during DNA replication. This chain is DNA primase DnaG, found in Methanoculleus marisnigri (strain ATCC 35101 / DSM 1498 / JR1).